A 389-amino-acid polypeptide reads, in one-letter code: Chalcone synthase J (389 aa).

C164 is a catalytic residue.

The protein belongs to the thiolase-like superfamily. Chalcone/stilbene synthases family.

The catalysed reaction is (E)-4-coumaroyl-CoA + 3 malonyl-CoA + 3 H(+) = 2',4,4',6'-tetrahydroxychalcone + 3 CO2 + 4 CoA. It participates in secondary metabolite biosynthesis; flavonoid biosynthesis. In terms of biological role, the primary product of this enzyme is 4,2',4',6'-tetrahydroxychalcone (also termed naringenin-chalcone or chalcone) which can under specific conditions spontaneously isomerize into naringenin. This chain is Chalcone synthase J (CHSJ), found in Petunia hybrida (Petunia).